We begin with the raw amino-acid sequence, 391 residues long: Multidrug resistance protein MdtL (391 aa).

A run of 12 helical transmembrane segments spans residues 4 to 24 (FLICSFALVLLYPAGIDMYLV), 42 to 62 (IAFSVYLAGMAAAMLFAGKVA), 69 to 89 (PVAIPGAALFIIASVFCSLAE), 93 to 113 (LFLAGRFLQGLGAGCCYVVAF), 131 to 151 (LLNGITCIIPVLAPVLGHLIM), 158 to 178 (SLFWTMAMMGIAVLMLSLFIL), 203 to 222 (FFLSRVVITTLSVSVILTFV), 245 to 265 (ALTAGVSMTVSFSTPFALGIF), 269 to 289 (TLMITSQVLFLAAGITLAVSP), 293 to 313 (VSLFGITLICAGFSVGFGVAM), 331 to 351 (LGIAQVCGSSLWIWLAAVVGI), and 356 to 376 (MLIGILIACSIVSLLLIMFVA).

It belongs to the major facilitator superfamily. DHA1 family. MdtL (TC 2.A.1.2.22) subfamily.

Its subcellular location is the cell inner membrane. In terms of biological role, confers resistance to chloramphenicol. The protein is Multidrug resistance protein MdtL of Escherichia coli O139:H28 (strain E24377A / ETEC).